A 252-amino-acid polypeptide reads, in one-letter code: Outer kinetochore KNL1 complex subunit ZWINT (252 aa).

Positions 80–99 (QSPDALASEDASRQKATETK) are disordered. Positions 89 to 99 (DASRQKATETK) are enriched in basic and acidic residues. The stretch at 120 to 221 (LSEALPQVKE…QRNQSYLQLL (102 aa)) forms a coiled coil. 2 positions are modified to phosphoserine: S216 and S249.

In terms of assembly, component of the KNL1 complex composed of KNL1 and ZWINT. Part of the ten-subunit outer kinetochore KMN network that includes the KNL1, MIS12 and NDC80 complexes; a bioriented kinetochore contains approximately 150 copies of the network. Interacts with the MIS12 complex subunits MIS12 DSN1, and PMF1. Interacts with the NDC80 complex subunit NDC80 during mitosis. Interacts with ZW10. Interacts with CETN3.

It localises to the nucleus. It is found in the chromosome. The protein localises to the centromere. Its subcellular location is the kinetochore. Functionally, acts as a component of the outer kinetochore KNL1 complex that serves as a docking point for spindle assembly checkpoint components and mediates microtubule-kinetochore interactions. Kinetochores, consisting of a centromere-associated inner segment and a microtubule-contacting outer segment, play a crucial role in chromosome segregation by mediating the physical connection between centromeric DNA and spindle microtubules. The outer kinetochore is made up of the ten-subunit KMN network, comprising the MIS12, NDC80 and KNL1 complexes, and auxiliary microtubule-associated components; together they connect the outer kinetochore with the inner kinetochore, bind microtubules, and mediate interactions with mitotic checkpoint proteins that delay anaphase until chromosomes are bioriented on the spindle. Targets the RZZ complex to the kinetochore at prometaphase. Recruits MAD2L1 to the kinetochore, but is not required for BUB1B localization. In addition to orienting mitotic chromosomes, it is also essential for alignment of homologous chromosomes during meiotic metaphase I. In meiosis I, required to activate the spindle assembly checkpoint at unattached kinetochores to correct erroneous kinetochore-microtubule attachments. The protein is Outer kinetochore KNL1 complex subunit ZWINT (Zwint) of Mus musculus (Mouse).